The primary structure comprises 536 residues: Chaperonin GroEL (536 aa).

Residues 29–32, 86–90, Gly412, and Asp493 contribute to the ATP site; these read TLGP and DGTTT.

Belongs to the chaperonin (HSP60) family. Forms a cylinder of 14 subunits composed of two heptameric rings stacked back-to-back. Interacts with the co-chaperonin GroES.

It localises to the cytoplasm. It catalyses the reaction ATP + H2O + a folded polypeptide = ADP + phosphate + an unfolded polypeptide.. Its function is as follows. Together with its co-chaperonin GroES, plays an essential role in assisting protein folding. The GroEL-GroES system forms a nano-cage that allows encapsulation of the non-native substrate proteins and provides a physical environment optimized to promote and accelerate protein folding. This is Chaperonin GroEL from Onion yellows phytoplasma (strain OY-M).